Reading from the N-terminus, the 225-residue chain is Riboflavin kinase (225 aa).

A unknown region spans residues methionine 1–threonine 89. The riboflavin kinase stretch occupies residues leucine 90 to lysine 225. Glycine 99–glutamine 104 is a CDP binding site. Mg(2+)-binding residues include threonine 128 and asparagine 130. Residues threonine 185 and glutamate 193 each contribute to the FMN site. Valine 198–arginine 201 is a binding site for CDP.

Belongs to the archaeal riboflavin kinase family. Mg(2+) is required as a cofactor.

The catalysed reaction is riboflavin + CTP = CDP + FMN + H(+). It functions in the pathway cofactor biosynthesis; FMN biosynthesis; FMN from riboflavin (CTP route): step 1/1. Catalyzes the CTP-dependent phosphorylation of riboflavin (vitamin B2) to form flavin mononucleotide (FMN). The polypeptide is Riboflavin kinase (ribK) (Methanosarcina mazei (strain ATCC BAA-159 / DSM 3647 / Goe1 / Go1 / JCM 11833 / OCM 88) (Methanosarcina frisia)).